The chain runs to 207 residues: Recombination protein RecR (207 aa).

A C4-type zinc finger spans residues 62-77 (CSRCNTFTEQDVCETC). Residues 85–184 (SVLCVVETPA…KVSRLARGVP (100 aa)) form the Toprim domain.

The protein belongs to the RecR family.

Functionally, may play a role in DNA repair. It seems to be involved in an RecBC-independent recombinational process of DNA repair. It may act with RecF and RecO. This is Recombination protein RecR from Ralstonia nicotianae (strain ATCC BAA-1114 / GMI1000) (Ralstonia solanacearum).